Reading from the N-terminus, the 249-residue chain is MKLTRKMVLSRAKASELHNVRKLNCWGSQLTDISICREMPSLEVITLSVNSVSTLEPVRSCRRLSELYLRRNRIPSLNELFYLKDLPHLRVLWLAENPCCGTSPHLYRMTVLRNLPHLQKLDNQAVTEEELTRALMEGDEITAAPHREGAGNGCPKPPYALNSVSSATETSQHLLSYTEETEVQGQTTTDQSPSFSPRDTMRSHKNRNILTAILLLLRELDTEGLETVQQTVGSRLQALHRPEPQEDME.

3 LRR repeats span residues 19-40, 41-62, and 63-84; these read NVRK…REMP, SLEV…RSCR, and RLSE…FYLK. The 41-residue stretch at 97–137 folds into the LRRCT domain; the sequence is NPCCGTSPHLYRMTVLRNLPHLQKLDNQAVTEEELTRALME. The tract at residues 146-203 is disordered; the sequence is HREGAGNGCPKPPYALNSVSSATETSQHLLSYTEETEVQGQTTTDQSPSFSPRDTMRS. Over residues 162 to 175 the composition is skewed to polar residues; it reads NSVSSATETSQHLL.

As to quaternary structure, found in a complex with CFAP410, NEK1 and SPATA7. Interacts with NEK1. In terms of tissue distribution, expressed in the retina.

Its subcellular location is the cell projection. The protein resides in the cilium. The protein localises to the cytoplasm. It is found in the cytoskeleton. It localises to the cilium basal body. Its subcellular location is the mitochondrion. The protein resides in the photoreceptor outer segment. Plays a role in cilia formation and/or maintenance. Plays a role in the regulation of cell morphology and cytoskeletal organization. Involved in DNA damage repair. The protein is Cilia- and flagella-associated protein 410 of Mus musculus (Mouse).